The following is a 608-amino-acid chain: MCGIVGIVGTQPVAERLVDALKRLEYRGYDSAGVATIDNGAMDRRRAEGKLFNLEKLVSEKPLPGVVGIAHTRWATHGVPNEINAHPHFVDGVAVVHNGIIENFSELREELSAEGATFTTQTDTEVVAQLLAKYTREGLGHREAMLKMLNHVTGAYALVVMFQDDPGTLLSARSGPPLAVGYGRGEMFLGSDAIALSPFTNEITYLVDGDCAIVTRDGAEIIDFSGKPVKRERQISQATAFVVDKGNHRHFMEKEIYEQPEVISHALSHYVDFATRTVKDADKAIDFASLSGLAISACGTAYLSGLIGKYWFERYARLPVEIDVASEFRYREIPLVPTQAALFISQSGETADTLAALRYCQQEGLKIGAVVNTRESTMARESDAIFPILAGPEIGVASTKAFTCQLAVLASLAVAAGKARGTLKPGEEKQLVQQLIEMPRIMSKVLNVIQPQIEALSRDLSRFKDVLYLGRGTSFPLALEGALKLKEISYIHAEGYAAGELKHGPIALIDENMPVIVIAPHDRFFEKTVSNMQEVAARGGRIIFITDEKGAAASKLETMATITLPNVDELIAPMVFSLPIQLLAYHTAVFMGTDVDQPRNLAKSVTVE.

The active-site Nucleophile; for GATase activity is Cys2. One can recognise a Glutamine amidotransferase type-2 domain in the interval 2 to 217; it reads CGIVGIVGTQ…DGDCAIVTRD (216 aa). 2 consecutive SIS domains span residues 281-422 and 456-598; these read ADKA…ARGT and LSRD…VDQP. The For Fru-6P isomerization activity role is filled by Lys603.

Homodimer.

The protein localises to the cytoplasm. The catalysed reaction is D-fructose 6-phosphate + L-glutamine = D-glucosamine 6-phosphate + L-glutamate. Catalyzes the first step in hexosamine metabolism, converting fructose-6P into glucosamine-6P using glutamine as a nitrogen source. The polypeptide is Glutamine--fructose-6-phosphate aminotransferase [isomerizing] (Agrobacterium fabrum (strain C58 / ATCC 33970) (Agrobacterium tumefaciens (strain C58))).